A 105-amino-acid polypeptide reads, in one-letter code: Translation initiation factor 1A 2 (105 aa).

The interval Met1 to Pro22 is disordered. Residues Thr17–Thr91 form the S1-like domain.

The protein belongs to the eIF-1A family.

In terms of biological role, seems to be required for maximal rate of protein biosynthesis. Enhances ribosome dissociation into subunits and stabilizes the binding of the initiator Met-tRNA(I) to 40 S ribosomal subunits. This Methanosarcina acetivorans (strain ATCC 35395 / DSM 2834 / JCM 12185 / C2A) protein is Translation initiation factor 1A 2 (eIF1A2).